A 469-amino-acid polypeptide reads, in one-letter code: ATP synthase subunit beta (469 aa).

155 to 162 (GGAGVGKT) provides a ligand contact to ATP.

It belongs to the ATPase alpha/beta chains family. F-type ATPases have 2 components, CF(1) - the catalytic core - and CF(0) - the membrane proton channel. CF(1) has five subunits: alpha(3), beta(3), gamma(1), delta(1), epsilon(1). CF(0) has three main subunits: a(1), b(2) and c(9-12). The alpha and beta chains form an alternating ring which encloses part of the gamma chain. CF(1) is attached to CF(0) by a central stalk formed by the gamma and epsilon chains, while a peripheral stalk is formed by the delta and b chains.

It is found in the cell inner membrane. The enzyme catalyses ATP + H2O + 4 H(+)(in) = ADP + phosphate + 5 H(+)(out). In terms of biological role, produces ATP from ADP in the presence of a proton gradient across the membrane. The catalytic sites are hosted primarily by the beta subunits. The polypeptide is ATP synthase subunit beta (Helicobacter pylori (strain P12)).